The primary structure comprises 449 residues: Chromosomal replication initiator protein DnaA (449 aa).

A domain I, interacts with DnaA modulators region spans residues 1–72 (MPNLEELWAY…VEGVYEFAQL (72 aa)). The segment at 72–109 (LEVDPVIMTKDELQPAPATDQRPAVEEDDQNLTFKAKT) is domain II. Residues 110-326 (HLNPKYTFDH…GALVRVQAFS (217 aa)) form a domain III, AAA+ region region. ATP-binding residues include glycine 154, glycine 156, lysine 157, and threonine 158. The domain IV, binds dsDNA stretch occupies residues 327–449 (TMKNEDITTS…ELRNILKNRG (123 aa)).

The protein belongs to the DnaA family. As to quaternary structure, oligomerizes as a right-handed, spiral filament on DNA at oriC.

The protein localises to the cytoplasm. Its function is as follows. Plays an essential role in the initiation and regulation of chromosomal replication. ATP-DnaA binds to the origin of replication (oriC) to initiate formation of the DNA replication initiation complex once per cell cycle. Binds the DnaA box (a 9 base pair repeat at the origin) and separates the double-stranded (ds)DNA. Forms a right-handed helical filament on oriC DNA; dsDNA binds to the exterior of the filament while single-stranded (ss)DNA is stabiized in the filament's interior. The ATP-DnaA-oriC complex binds and stabilizes one strand of the AT-rich DNA unwinding element (DUE), permitting loading of DNA polymerase. After initiation quickly degrades to an ADP-DnaA complex that is not apt for DNA replication. Binds acidic phospholipids. The sequence is that of Chromosomal replication initiator protein DnaA from Lacticaseibacillus paracasei (strain ATCC 334 / BCRC 17002 / CCUG 31169 / CIP 107868 / KCTC 3260 / NRRL B-441) (Lactobacillus paracasei).